A 2515-amino-acid polypeptide reads, in one-letter code: Probable maltase-glucoamylase 2 (2515 aa).

The Cytoplasmic segment spans residues 1–9; that stretch reads MARKLSVLE. Residues 10-30 traverse the membrane as a helical segment; the sequence is VLLIIFCLIVVTIDILLLLLV. Residues 31–482 lie on the Lumenal side of the membrane; that stretch reads LEETSDTSFT…DGVWIEMNEV (452 aa). Positions 41 to 88 constitute a P-type 1 domain; that stretch reads PECPEIPQSERIDCTPDQEVTEDICRWQYKCCWSPVADANVPRCFFPW. 3 cysteine pairs are disulfide-bonded: cysteine 43–cysteine 72, cysteine 54–cysteine 71, and cysteine 65–cysteine 84. The interval 152 to 865 is maltase; sequence SHENINLVDG…MDKQPANFIV (714 aa). Residue asparagine 167 is glycosylated (N-linked (GlcNAc...) asparagine). A Sulfotyrosine modification is found at tyrosine 371. N-linked (GlcNAc...) asparagine glycosylation is present at asparagine 421. Glutamate 478 acts as the Nucleophile in catalysis. Glutamate 481 is an active-site residue. Disulfide bonds link cysteine 608/cysteine 619, cysteine 916/cysteine 933, and cysteine 928/cysteine 946. The N-linked (GlcNAc...) asparagine glycan is linked to asparagine 613. One can recognise a P-type 2 domain in the interval 904–950; sequence WNLPVSDLEKFNCYPDDPTASEESCRQRGCLWEDTSTPGVPTCYYDT. The tract at residues 1023-1766 is glucoamylase; sequence PLNTPPQPVG…GVNTYVTQVS (744 aa). Position 1238 is a sulfotyrosine (tyrosine 1238). Aspartate 1375 functions as the Nucleophile in the catalytic mechanism. Glutamate 1378 is a catalytic residue. Disordered regions lie at residues 1816 to 1901, 1994 to 2015, and 2037 to 2091; these read TPTK…PITT, STTV…STNA, and TVPD…SSTT. The segment covering 1817-1831 has biased composition (polar residues); the sequence is PTKTSTIPMSSHPSP. A compositionally biased stretch (low complexity) spans 1832–1901; it reads STTNATSSET…STNATVPITT (70 aa). The N-linked (GlcNAc...) asparagine glycan is linked to asparagine 2249.

Belongs to the glycosyl hydrolase 31 family.

The protein resides in the membrane. It catalyses the reaction Hydrolysis of terminal (1-&gt;4)-linked alpha-D-glucose residues successively from non-reducing ends of the chains with release of beta-D-glucose.. The protein is Probable maltase-glucoamylase 2 of Homo sapiens (Human).